The sequence spans 323 residues: Protein SopB (323 aa).

A disordered region spans residues 1 to 20 (MKRAPVIPKHTLNTQPVEDT). Residues 11 to 20 (TLNTQPVEDT) show a composition bias toward polar residues. The segment at residues 180 to 199 (SALADAENISRKIITRCINT) is a DNA-binding region (H-T-H motif).

Belongs to the ParB family.

Control of plasmid partitioning; required to recognize the cis-acting. Binds specifically with the DNA segment containing the sopC region. SopB is trans-acting. This Escherichia coli O157:H7 protein is Protein SopB (sopB).